The primary structure comprises 545 residues: Chaperonin GroEL (545 aa).

ATP-binding positions include 30 to 33 (TLGP), lysine 51, 87 to 91 (DGTTT), glycine 415, and aspartate 496. The segment at 526-545 (PEPKAPAGGMPDMGGMGGMM) is disordered. A compositionally biased stretch (gly residues) spans 536–545 (PDMGGMGGMM).

This sequence belongs to the chaperonin (HSP60) family. Forms a cylinder of 14 subunits composed of two heptameric rings stacked back-to-back. Interacts with the co-chaperonin GroES.

The protein resides in the cytoplasm. It catalyses the reaction ATP + H2O + a folded polypeptide = ADP + phosphate + an unfolded polypeptide.. Functionally, together with its co-chaperonin GroES, plays an essential role in assisting protein folding. The GroEL-GroES system forms a nano-cage that allows encapsulation of the non-native substrate proteins and provides a physical environment optimized to promote and accelerate protein folding. This chain is Chaperonin GroEL, found in Paracoccus denitrificans (strain Pd 1222).